The chain runs to 263 residues: Glutathione S-transferase F8, chloroplastic (263 aa).

A chloroplast-targeting transit peptide spans 1-49 (MGAIQARLPLFLSPPSIKHHTFLHSSSSNSNFKIRSNKSSSSSSSSIIM). The GST N-terminal domain occupies 50-131 (ASIKVHGVPM…YLAEEYSEKG (82 aa)). Residues 60–61 (ST), 89–90 (HK), 102–103 (QI), and 115–116 (ES) contribute to the glutathione site. The GST C-terminal domain maps to 139 to 263 (CKKVKATTNV…WAKVIDLQKQ (125 aa)). A Phosphothreonine modification is found at Thr177.

Belongs to the GST superfamily. Phi family. In terms of tissue distribution, isoform 1 is predominantly expressed in leaves and isoform 2 in roots.

It is found in the plastid. Its subcellular location is the chloroplast. It localises to the cytoplasm. The protein resides in the cytosol. The enzyme catalyses RX + glutathione = an S-substituted glutathione + a halide anion + H(+). In vitro, possesses glutathione S-transferase activity toward 1-chloro-2,4-dinitrobenzene (CDNB) and glutathione peroxidase activity toward cumene hydroperoxide and linoleic acid-13-hydroperoxide. May be involved in the conjugation of reduced glutathione to a wide number of exogenous and endogenous hydrophobic electrophiles and have a detoxification role against certain herbicides. This chain is Glutathione S-transferase F8, chloroplastic (GSTF8), found in Arabidopsis thaliana (Mouse-ear cress).